Here is a 218-residue protein sequence, read N- to C-terminus: MFQGQRGWFCGSVSQDLRQIWEDEGGMVSDVKAADFLFSCDASHPDTLRIYQSLEYIEDNATVFHAYYLAAIANTEMKNSVALGHFVLPPACLQKEIRRKIGSFIWEQDEKFQIEKHDRMASSDKENIRPTPEHKQELSKSAEHHLTRTPVIEKQMCFPLHSYPVNNMVTGYISIDALEKFLGELHDFTPGSSGYLAYHIQDEINMSAIKNKLRRKLS.

Residues 117 to 143 (HDRMASSDKENIRPTPEHKQELSKSAE) form a disordered region.

It belongs to the TERB2 family. In terms of assembly, component of the MAJIN-TERB1-TERB2 complex, composed of MAJIN, TERB1 and TERB2. In terms of tissue distribution, specifically expressed in germline tissues.

It localises to the chromosome. The protein resides in the telomere. It is found in the nucleus inner membrane. Meiosis-specific telomere-associated protein involved in meiotic telomere attachment to the nucleus inner membrane, a crucial step for homologous pairing and synapsis. Component of the MAJIN-TERB1-TERB2 complex, which promotes telomere cap exchange by mediating attachment of telomeric DNA to the inner nuclear membrane and replacement of the protective cap of telomeric chromosomes: in early meiosis, the MAJIN-TERB1-TERB2 complex associates with telomeric DNA and the shelterin/telosome complex. During prophase, the complex matures and promotes release of the shelterin/telosome complex from telomeric DNA. This Mus musculus (Mouse) protein is Telomere repeats-binding bouquet formation protein 2.